A 119-amino-acid chain; its full sequence is Large ribosomal subunit protein bL20 (119 aa).

The protein belongs to the bacterial ribosomal protein bL20 family.

Functionally, binds directly to 23S ribosomal RNA and is necessary for the in vitro assembly process of the 50S ribosomal subunit. It is not involved in the protein synthesizing functions of that subunit. The chain is Large ribosomal subunit protein bL20 from Burkholderia ambifaria (strain MC40-6).